A 288-amino-acid polypeptide reads, in one-letter code: Rhox homeobox family member 2B (288 aa).

The interval 16–136 (SPAVDDEKEL…GLEPGNAQQP (121 aa)) is disordered. The segment covering 39–48 (VKEEEEDAQP) has biased composition (acidic residues). The span at 68–80 (GEEKDGGGEEKDG) shows a compositional bias: basic and acidic residues. The homeobox DNA-binding region spans 134–193 (QQPNVHAFTPLQLQELECIFQREQFPSEFLRRRLARSMNVTELAVQIWFENRRAKWRRHQ). A Nuclear localization signal motif is present at residues 186–195 (RAKWRRHQRA).

Belongs to the paired-like homeobox family. PEPP subfamily. As to expression, expressed in testis, mainly expressed in germ cells, but also detected in somatic cells such as Sertoli cells, Leydig cells and peritubular cells.

The protein localises to the nucleus. Its function is as follows. Transcription factor maybe involved in reproductive processes. Modulates expression of target genes encoding proteins involved in processes relevant to spermatogenesis. This is Rhox homeobox family member 2B from Homo sapiens (Human).